A 231-amino-acid chain; its full sequence is NifU-like protein 1, chloroplastic (231 aa).

Residues 1 to 69 constitute a chloroplast transit peptide; it reads MMASLATSIS…SSQGEKISPL (69 aa).

Belongs to the NifU family. In terms of assembly, homodimer; disulfide-linked. Predominantly expressed in floral stalks and siliques. Expressed in leaves, cauline leaves, flower stalks and flowers (at protein level).

Its subcellular location is the plastid. The protein resides in the chloroplast stroma. Functionally, molecular scaffold for [Fe-S] cluster assembly of chloroplastic iron-sulfur proteins. The sequence is that of NifU-like protein 1, chloroplastic (NIFU1) from Arabidopsis thaliana (Mouse-ear cress).